Here is a 562-residue protein sequence, read N- to C-terminus: MOB kinase activator-like 2 (562 aa).

Positions 30 to 50 (KSGSVQGTTATATATGPPSPP) are disordered. The segment covering 31–45 (SGSVQGTTATATATG) has biased composition (low complexity). Zn(2+) contacts are provided by C170, C175, H250, and H255. 3 disordered regions span residues 304 to 378 (DDTS…TASA), 468 to 523 (NFSN…STTV), and 538 to 562 (GASA…SSTA). Low complexity-rich tracts occupy residues 305-349 (DTSG…NSTS), 357-378 (NSQS…TASA), and 471-481 (NNNNNNHNLNH). Positions 482–514 (LNHHHHHHHHQHHHQHHPHGHHGHQGHQGHQGH) are enriched in basic residues. Residues 547-562 (AVSAATGGATSASSTA) show a composition bias toward low complexity.

It belongs to the MOB1/phocein family. Interacts with and activates trc, also interacts with wts.

The protein localises to the cytoplasm. The protein resides in the nucleus. Required for the normal morphogenesis of a variety of polarized outgrowths including epidermal hairs, bristles, arista laterals, and dendrites. The polypeptide is MOB kinase activator-like 2 (Drosophila pseudoobscura pseudoobscura (Fruit fly)).